Reading from the N-terminus, the 369-residue chain is Type 2 DNA topoisomerase 6 subunit A (369 aa).

A Topo IIA-type catalytic domain is found at 11–149; that stretch reads QRDLLAREKL…FHMRPEEDGA (139 aa). The active-site O-(5'-phospho-DNA)-tyrosine intermediate is Tyr-106. The Mg(2+) site is built by Glu-202 and Asp-254.

The protein belongs to the TOP6A family. As to quaternary structure, homodimer. Heterotetramer of two Top6A and two Top6B chains. Requires Mg(2+) as cofactor.

The catalysed reaction is ATP-dependent breakage, passage and rejoining of double-stranded DNA.. In terms of biological role, relaxes both positive and negative superturns and exhibits a strong decatenase activity. This chain is Type 2 DNA topoisomerase 6 subunit A, found in Methanosarcina barkeri (strain Fusaro / DSM 804).